We begin with the raw amino-acid sequence, 134 residues long: Profilin-2 (134 aa).

Cys-13 and Cys-118 are joined by a disulfide. An Involved in PIP2 interaction motif is present at residues Ala-84–Thr-100. Thr-114 bears the Phosphothreonine mark.

The protein belongs to the profilin family. As to quaternary structure, occurs in many kinds of cells as a complex with monomeric actin in a 1:1 ratio. Phosphorylated by MAP kinases.

The protein localises to the cytoplasm. It localises to the cytoskeleton. Binds to actin and affects the structure of the cytoskeleton. At high concentrations, profilin prevents the polymerization of actin, whereas it enhances it at low concentrations. The sequence is that of Profilin-2 from Olea europaea (Common olive).